The following is a 936-amino-acid chain: Lipoxygenase 2.1, chloroplastic (936 aa).

The segment at 1–69 (MLTATKPLVG…LSADSNGAAV (69 aa)) is disordered. Low complexity predominate over residues 47–59 (STSTSTTTTTTTT). The 130-residue stretch at 88 to 217 (MKATVTVHMS…CTPDKRVFFP (130 aa)) folds into the PLAT domain. The 717-residue stretch at 220–936 (SYLPSQTPKG…EMGIPNSISI (717 aa)) folds into the Lipoxygenase domain. Positions 264 to 308 (LGNPDDDNNPTTRPVLGGKEHPYPRRCRTGRPRSKKDPFSEERSH) are disordered. A compositionally biased stretch (basic residues) spans 287-297 (PRRCRTGRPRS). The segment covering 298–308 (KKDPFSEERSH) has biased composition (basic and acidic residues). Positions 587, 592, 777, 781, and 936 each coordinate Fe cation.

The protein belongs to the lipoxygenase family. The cofactor is Fe cation. Post-translationally, the N-terminus is blocked.

The protein resides in the plastid. The protein localises to the chloroplast. The catalysed reaction is (9Z,12Z)-octadecadienoate + O2 = (13S)-hydroperoxy-(9Z,11E)-octadecadienoate. The enzyme catalyses (9Z,12Z,15Z)-octadecatrienoate + O2 = (13S)-hydroperoxy-(9Z,11E,15Z)-octadecatrienoate. It functions in the pathway lipid metabolism; oxylipin biosynthesis. Plant lipoxygenase may be involved in a number of diverse aspects of plant physiology including growth and development, pest resistance, and senescence or responses to wounding. This enzyme is possibly involved in jasmonic acid synthesis. It exhibits linoleate 13-lipoxygenase and arachidonate 15-lipoxygenase activity. The chain is Lipoxygenase 2.1, chloroplastic (LOX2.1) from Hordeum vulgare (Barley).